The sequence spans 671 residues: Gametogenetin-binding protein 2-like (671 aa).

Disordered regions lie at residues 372-489 (REQK…ARVQ) and 532-562 (VRDS…SEVS). Residues 373-384 (EQKKLKKKKKKD) are compositionally biased toward basic residues. The segment covering 385–395 (EKKNLLHRQCD) has biased composition (basic and acidic residues). A compositionally biased stretch (acidic residues) spans 396–420 (DTEANESDEEEEELRNEELDLEEES). The segment covering 455 to 472 (TKSKPKKQSKKKKQKKAA) has biased composition (basic residues). 2 stretches are compositionally biased toward polar residues: residues 476–486 (MGNQKQMQATA) and 546–557 (GSRTSSAISSPE).

The protein is Gametogenetin-binding protein 2-like of Drosophila melanogaster (Fruit fly).